The sequence spans 172 residues: Shikimate kinase (172 aa).

14–19 contributes to the ATP binding site; that stretch reads GAGKST. S18 contributes to the Mg(2+) binding site. Substrate contacts are provided by D36, R60, and G82. Residue R120 participates in ATP binding. Position 139 (R139) interacts with substrate. Q156 provides a ligand contact to ATP.

This sequence belongs to the shikimate kinase family. Monomer. It depends on Mg(2+) as a cofactor.

The protein resides in the cytoplasm. The enzyme catalyses shikimate + ATP = 3-phosphoshikimate + ADP + H(+). Its pathway is metabolic intermediate biosynthesis; chorismate biosynthesis; chorismate from D-erythrose 4-phosphate and phosphoenolpyruvate: step 5/7. In terms of biological role, catalyzes the specific phosphorylation of the 3-hydroxyl group of shikimic acid using ATP as a cosubstrate. In Vibrio parahaemolyticus serotype O3:K6 (strain RIMD 2210633), this protein is Shikimate kinase.